The primary structure comprises 167 residues: Transmembrane protein 229B (167 aa).

Residues 1–14 (MASAEPLTALSRWY) lie on the Cytoplasmic side of the membrane. Residues 15–35 (LYAIHGYFCEVMFTAAWEFVV) form a helical membrane-spanning segment. Topologically, residues 36-40 (NLNWK) are extracellular. Residues 41–61 (FPGVTSVWALFIYGTSILIVE) form a helical membrane-spanning segment. Residues 62 to 73 (RMYLRLRGRCPL) are Cytoplasmic-facing. The chain crosses the membrane as a helical span at residues 74–94 (LLRCLIYTLWTYLWEFTTGFI). At 95–109 (LRQFNACPWDYSQFD) the chain is on the extracellular side. A helical transmembrane segment spans residues 110 to 130 (FDFMGLITLEYAVPWFCGALI). Topologically, residues 131–167 (MEQFIIRNTLRLRFDKDAEPGEPSGALALANGHVKTD) are cytoplasmic.

The protein belongs to the TMEM229 family.

The protein localises to the membrane. This Homo sapiens (Human) protein is Transmembrane protein 229B (TMEM229B).